We begin with the raw amino-acid sequence, 341 residues long: Dihydroorotate dehydrogenase (quinone) (341 aa).

Residues 61 to 65 (AGLDK) and T85 contribute to the FMN site. Residue K65 coordinates substrate. 110 to 114 (NRMGF) serves as a coordination point for substrate. Positions 138 and 171 each coordinate FMN. N171 is a substrate binding site. S174 functions as the Nucleophile in the catalytic mechanism. N176 lines the substrate pocket. FMN contacts are provided by K216 and T244. Position 245–246 (245–246 (NT)) interacts with substrate. FMN contacts are provided by residues G267, G296, and 317-318 (YS).

Belongs to the dihydroorotate dehydrogenase family. Type 2 subfamily. As to quaternary structure, monomer. FMN is required as a cofactor.

It is found in the cell membrane. It catalyses the reaction (S)-dihydroorotate + a quinone = orotate + a quinol. It participates in pyrimidine metabolism; UMP biosynthesis via de novo pathway; orotate from (S)-dihydroorotate (quinone route): step 1/1. Catalyzes the conversion of dihydroorotate to orotate with quinone as electron acceptor. This Pseudomonas putida (strain W619) protein is Dihydroorotate dehydrogenase (quinone).